A 919-amino-acid polypeptide reads, in one-letter code: Valine--tRNA ligase (919 aa).

Positions 66 to 76 (PNVTGQLHMGH) match the 'HIGH' region motif. The short motif at 562-566 (KMSKS) is the 'KMSKS' region element. K565 serves as a coordination point for ATP. Positions 852-919 (TVDKEAERKR…RISARLEELK (68 aa)) form a coiled coil.

It belongs to the class-I aminoacyl-tRNA synthetase family. ValS type 1 subfamily. In terms of assembly, monomer.

The protein resides in the cytoplasm. It catalyses the reaction tRNA(Val) + L-valine + ATP = L-valyl-tRNA(Val) + AMP + diphosphate. Functionally, catalyzes the attachment of valine to tRNA(Val). As ValRS can inadvertently accommodate and process structurally similar amino acids such as threonine, to avoid such errors, it has a 'posttransfer' editing activity that hydrolyzes mischarged Thr-tRNA(Val) in a tRNA-dependent manner. This chain is Valine--tRNA ligase, found in Corynebacterium diphtheriae (strain ATCC 700971 / NCTC 13129 / Biotype gravis).